The sequence spans 384 residues: Probable circularly permuted 1,3-beta-glucanase PGA52 (384 aa).

An N-terminal signal peptide occupies residues 1-17 (MLFSSLLVSTLVSVATA). 5 N-linked (GlcNAc...) asparagine glycosylation sites follow: asparagine 118, asparagine 128, asparagine 170, asparagine 210, and asparagine 244. Residues 254-259 (EFDIFE) carry the ExDxxE motif motif. N-linked (GlcNAc...) asparagine glycans are attached at residues asparagine 262 and asparagine 318. Serine 361 is lipidated: GPI-anchor amidated serine. Positions 362–384 (GGVSYQPSFITNLLMTVLTLWVI) are cleaved as a propeptide — removed in mature form.

It belongs to the PGA52 family.

The protein localises to the cell membrane. It carries out the reaction Hydrolysis of (1-&gt;3)-beta-D-glucosidic linkages in (1-&gt;3)-beta-D-glucans.. In terms of biological role, probable circularly permuted 1,3-beta-glucanase involved in cell wall modification through beta-1,3-glucan network alterations such as increased branching or remodeling. The protein is Probable circularly permuted 1,3-beta-glucanase PGA52 (PGA52) of Candida albicans (strain SC5314 / ATCC MYA-2876) (Yeast).